Reading from the N-terminus, the 487-residue chain is Glutamyl-tRNA(Gln) amidotransferase subunit A (487 aa).

Active-site charge relay system residues include Lys78 and Ser153. The active-site Acyl-ester intermediate is Ser177.

The protein belongs to the amidase family. GatA subfamily. In terms of assembly, heterotrimer of A, B and C subunits.

It carries out the reaction L-glutamyl-tRNA(Gln) + L-glutamine + ATP + H2O = L-glutaminyl-tRNA(Gln) + L-glutamate + ADP + phosphate + H(+). In terms of biological role, allows the formation of correctly charged Gln-tRNA(Gln) through the transamidation of misacylated Glu-tRNA(Gln) in organisms which lack glutaminyl-tRNA synthetase. The reaction takes place in the presence of glutamine and ATP through an activated gamma-phospho-Glu-tRNA(Gln). In Oleidesulfovibrio alaskensis (strain ATCC BAA-1058 / DSM 17464 / G20) (Desulfovibrio alaskensis), this protein is Glutamyl-tRNA(Gln) amidotransferase subunit A.